A 382-amino-acid polypeptide reads, in one-letter code: Small ribosomal subunit protein mS35 (382 aa).

The span at 363 to 375 shows a compositional bias: gly residues; that stretch reads GRGGKALPGGKGG. The segment at 363 to 382 is disordered; that stretch reads GRGGKALPGGKGGKMQRSKR.

Belongs to the mitochondrion-specific ribosomal protein mS35 family. In terms of assembly, component of the mitochondrial small ribosomal subunit (mt-SSU). Mature N.crassa 74S mitochondrial ribosomes consist of a small (37S) and a large (54S) subunit. The 37S small subunit contains a 16S ribosomal RNA (16S mt-rRNA) and 32 different proteins. The 54S large subunit contains a 23S rRNA (23S mt-rRNA) and 42 different proteins.

The protein resides in the mitochondrion. In terms of biological role, component of the mitochondrial ribosome (mitoribosome), a dedicated translation machinery responsible for the synthesis of mitochondrial genome-encoded proteins, including at least some of the essential transmembrane subunits of the mitochondrial respiratory chain. The mitoribosomes are attached to the mitochondrial inner membrane and translation products are cotranslationally integrated into the membrane. The chain is Small ribosomal subunit protein mS35 (rsm24) from Neurospora crassa (strain ATCC 24698 / 74-OR23-1A / CBS 708.71 / DSM 1257 / FGSC 987).